Here is a 277-residue protein sequence, read N- to C-terminus: Large ribosomal subunit protein uL2 (277 aa).

Disordered stretches follow at residues 1–58 (MGIR…GGGH) and 223–277 (GVVM…GKKR). Residues 23–33 (EITRSEPEKSL) show a composition bias toward basic and acidic residues. A compositionally biased stretch (basic residues) spans 37-58 (LHGRGGRNAHGKITTRHKGGGH). A compositionally biased stretch (basic and acidic residues) spans 251–267 (GKPEGRTRRNKPSDKLI). A compositionally biased stretch (basic residues) spans 268 to 277 (VRRRRTGKKR).

The protein belongs to the universal ribosomal protein uL2 family. As to quaternary structure, part of the 50S ribosomal subunit. Forms a bridge to the 30S subunit in the 70S ribosome.

In terms of biological role, one of the primary rRNA binding proteins. Required for association of the 30S and 50S subunits to form the 70S ribosome, for tRNA binding and peptide bond formation. It has been suggested to have peptidyltransferase activity; this is somewhat controversial. Makes several contacts with the 16S rRNA in the 70S ribosome. In Saccharopolyspora erythraea (strain ATCC 11635 / DSM 40517 / JCM 4748 / NBRC 13426 / NCIMB 8594 / NRRL 2338), this protein is Large ribosomal subunit protein uL2.